We begin with the raw amino-acid sequence, 316 residues long: Pyridoxal 5'-phosphate synthase subunit PdxS (316 aa).

Residue Asp-44 coordinates D-ribose 5-phosphate. The active-site Schiff-base intermediate with D-ribose 5-phosphate is Lys-101. A D-ribose 5-phosphate-binding site is contributed by Gly-173. Lys-185 provides a ligand contact to D-glyceraldehyde 3-phosphate. D-ribose 5-phosphate is bound by residues Gly-234 and 255-256 (GS).

Belongs to the PdxS/SNZ family. In terms of assembly, in the presence of PdxT, forms a dodecamer of heterodimers.

It carries out the reaction aldehydo-D-ribose 5-phosphate + D-glyceraldehyde 3-phosphate + L-glutamine = pyridoxal 5'-phosphate + L-glutamate + phosphate + 3 H2O + H(+). It participates in cofactor biosynthesis; pyridoxal 5'-phosphate biosynthesis. Functionally, catalyzes the formation of pyridoxal 5'-phosphate from ribose 5-phosphate (RBP), glyceraldehyde 3-phosphate (G3P) and ammonia. The ammonia is provided by the PdxT subunit. Can also use ribulose 5-phosphate and dihydroxyacetone phosphate as substrates, resulting from enzyme-catalyzed isomerization of RBP and G3P, respectively. The polypeptide is Pyridoxal 5'-phosphate synthase subunit PdxS (Sulfurisphaera tokodaii (strain DSM 16993 / JCM 10545 / NBRC 100140 / 7) (Sulfolobus tokodaii)).